The chain runs to 308 residues: uncharacterized protein (308 aa).

The region spanning 11-87 (KRLDSLLASL…LKLEVLFEDK (77 aa)) is the S4 RNA-binding domain. The active site involves D131.

This sequence belongs to the pseudouridine synthase RluA family.

It catalyses the reaction a uridine in RNA = a pseudouridine in RNA. This is an uncharacterized protein from Mycoplasma genitalium (strain ATCC 33530 / DSM 19775 / NCTC 10195 / G37) (Mycoplasmoides genitalium).